The sequence spans 229 residues: uncharacterized protein (229 aa).

7 helical membrane-spanning segments follow: residues isoleucine 21–tyrosine 41, methionine 56–alanine 76, alanine 83–valine 103, threonine 109–valine 129, alanine 141–serine 161, glycine 162–serine 182, and tryptophan 202–leucine 222.

Belongs to the BI1 family.

Its subcellular location is the cell membrane. This is an uncharacterized protein from Streptococcus pyogenes serotype M6 (strain ATCC BAA-946 / MGAS10394).